The chain runs to 144 residues: Thyrostimulin alpha-2 subunit (144 aa).

The first 41 residues, 1–41, serve as a signal peptide directing secretion; it reads MGRRDSGRAVAQRYRGVTRGVTVIACLMVVCACVGLCDATG. 4 disulfides stabilise this stretch: cysteine 52–cysteine 107, cysteine 66–cysteine 121, cysteine 76–cysteine 136, and cysteine 80–cysteine 138.

It belongs to the glycoprotein hormones subunit alpha family. Heterodimer with GPHB5; non-covalently-linked. In terms of tissue distribution, expressed by the venom duct.

Its subcellular location is the secreted. In Conus victoriae (Queen Victoria cone), this protein is Thyrostimulin alpha-2 subunit.